Reading from the N-terminus, the 149-residue chain is UPF0260 protein Pfl01_1392 (149 aa).

This sequence belongs to the UPF0260 family.

The protein is UPF0260 protein Pfl01_1392 of Pseudomonas fluorescens (strain Pf0-1).